Consider the following 139-residue polypeptide: uncharacterized protein (139 aa).

A disordered region spans residues 83–109 (LIPPKKTSPATSSSLKPPRRPRGCLNG). The span at 86 to 98 (PKKTSPATSSSLK) shows a compositional bias: low complexity.

This sequence to M.pneumoniae MPN_091 and MPN_463.

This is an uncharacterized protein from Mycoplasma pneumoniae (strain ATCC 29342 / M129 / Subtype 1) (Mycoplasmoides pneumoniae).